The sequence spans 549 residues: Guanine nucleotide-binding protein-like 3 (549 aa).

Over residues 1–45 (MKRPKLKKASKRMTCHKRYKIQKKVREHHRKLRKEAKKRGHKKPR) the composition is skewed to basic residues. Disordered regions lie at residues 1-56 (MKRP…SAPF) and 73-104 (ELKQQQKLDRQKELEKKRKLETNPDIKPSNVE). The segment at 2–46 (KRPKLKKASKRMTCHKRYKIQKKVREHHRKLRKEAKKRGHKKPRK) is basic. Residues 56 to 95 (FKEALLREAELRKQRLEELKQQQKLDRQKELEKKRKLETN) adopt a coiled-coil conformation. The segment covering 73–96 (ELKQQQKLDRQKELEKKRKLETNP) has biased composition (basic and acidic residues). The residue at position 79 (K79) is an N6-acetyllysine. Residues K91 and K99 each participate in a glycyl lysine isopeptide (Lys-Gly) (interchain with G-Cter in SUMO2) cross-link. Position 101 is a phosphoserine (S101). Glycyl lysine isopeptide (Lys-Gly) (interchain with G-Cter in SUMO2) cross-links involve residues K114, K179, K196, K253, K267, and K275. One can recognise a CP-type G domain in the interval 131-312 (CQELKKVIEA…IIDSPSFIVS (182 aa)). 178 to 181 (NKSD) lines the GTP pocket. 261–268 (GFPNVGKS) contacts GTP. The interval 282 to 456 (VGVSMGLTRS…HLANSILFQS (175 aa)) is intermediate. 305 to 308 (DSPS) is a GTP binding site. Residues 465–543 (EEKDIHEELP…KIIEEDDAYD (79 aa)) are acidic. Over residues 474-483 (PKRKERKQEE) the composition is skewed to basic and acidic residues. Positions 474–532 (PKRKERKQEEREDDKDSDQETVDEEVDENSSGMFAAEETGEALSEETTAGEQSTRSFIL) are disordered. Positions 484–501 (REDDKDSDQETVDEEVDE) are enriched in acidic residues. Phosphoserine occurs at positions 490, 504, 517, and 529. Over residues 518-529 (EETTAGEQSTRS) the composition is skewed to polar residues.

It belongs to the TRAFAC class YlqF/YawG GTPase family. As to quaternary structure, interacts with MDM2; this interaction stabilizes MDM2. Interaction with MDM2 occurs in the nucleoplasm and is triggered by a nucleolar release mechanism, such as mitosis-induced nucleolar disassembly. Indirectly interacts with TP53, via MDM2-binding. Interacts with TSC22D1 isoform 2. In terms of tissue distribution, increased levels in lung tissue in cancer patients.

It localises to the nucleus. The protein localises to the nucleolus. Its function is as follows. May be required to maintain the proliferative capacity of stem cells. Stabilizes MDM2 by preventing its ubiquitination, and hence proteasomal degradation. The chain is Guanine nucleotide-binding protein-like 3 (GNL3) from Homo sapiens (Human).